Reading from the N-terminus, the 147-residue chain is Ribonuclease 4 (147 aa).

A signal peptide spans 1 to 28 (MALQRTQAFLLLLLLTLLGLGLVQPSYG). Residue Gln-29 is modified to Pyrrolidone carboxylic acid. The dUMP site is built by Arg-35, His-40, Lys-68, Asn-71, and Thr-72. His-40 functions as the Proton acceptor in the catalytic mechanism. Intrachain disulfides connect Cys-53-Cys-109, Cys-67-Cys-120, Cys-85-Cys-135, and Cys-92-Cys-99. His-144 serves as the catalytic Proton donor. Position 145 (Phe-145) interacts with dUMP.

This sequence belongs to the pancreatic ribonuclease family.

The protein resides in the secreted. In terms of biological role, cleaves preferentially after uridine bases. Has antimicrobial activity against uropathogenic E.coli (UPEC). Probably contributes to urinary tract sterility. This chain is Ribonuclease 4 (RNASE4), found in Bos taurus (Bovine).